The chain runs to 209 residues: Thiamine-phosphate synthase (209 aa).

4-amino-2-methyl-5-(diphosphooxymethyl)pyrimidine is bound by residues 36–40 (QYRDK) and Asn-68. Mg(2+)-binding residues include Asp-69 and Asp-87. Residue Thr-106 coordinates 4-amino-2-methyl-5-(diphosphooxymethyl)pyrimidine. A 2-[(2R,5Z)-2-carboxy-4-methylthiazol-5(2H)-ylidene]ethyl phosphate-binding site is contributed by 133–135 (SST). Lys-136 contacts 4-amino-2-methyl-5-(diphosphooxymethyl)pyrimidine. Residue Gly-163 coordinates 2-[(2R,5Z)-2-carboxy-4-methylthiazol-5(2H)-ylidene]ethyl phosphate.

This sequence belongs to the thiamine-phosphate synthase family. Mg(2+) is required as a cofactor.

It carries out the reaction 2-[(2R,5Z)-2-carboxy-4-methylthiazol-5(2H)-ylidene]ethyl phosphate + 4-amino-2-methyl-5-(diphosphooxymethyl)pyrimidine + 2 H(+) = thiamine phosphate + CO2 + diphosphate. The enzyme catalyses 2-(2-carboxy-4-methylthiazol-5-yl)ethyl phosphate + 4-amino-2-methyl-5-(diphosphooxymethyl)pyrimidine + 2 H(+) = thiamine phosphate + CO2 + diphosphate. The catalysed reaction is 4-methyl-5-(2-phosphooxyethyl)-thiazole + 4-amino-2-methyl-5-(diphosphooxymethyl)pyrimidine + H(+) = thiamine phosphate + diphosphate. The protein operates within cofactor biosynthesis; thiamine diphosphate biosynthesis; thiamine phosphate from 4-amino-2-methyl-5-diphosphomethylpyrimidine and 4-methyl-5-(2-phosphoethyl)-thiazole: step 1/1. Its function is as follows. Condenses 4-methyl-5-(beta-hydroxyethyl)thiazole monophosphate (THZ-P) and 2-methyl-4-amino-5-hydroxymethyl pyrimidine pyrophosphate (HMP-PP) to form thiamine monophosphate (TMP). The protein is Thiamine-phosphate synthase of Azotobacter vinelandii (strain DJ / ATCC BAA-1303).